The chain runs to 207 residues: Large ribosomal subunit protein uL4 (207 aa).

The interval 49–78 (HAVKNRSAVSGGGRKPWRQKGTGRARQGSI) is disordered.

The protein belongs to the universal ribosomal protein uL4 family. As to quaternary structure, part of the 50S ribosomal subunit.

Its function is as follows. One of the primary rRNA binding proteins, this protein initially binds near the 5'-end of the 23S rRNA. It is important during the early stages of 50S assembly. It makes multiple contacts with different domains of the 23S rRNA in the assembled 50S subunit and ribosome. Forms part of the polypeptide exit tunnel. This is Large ribosomal subunit protein uL4 from Streptococcus pneumoniae serotype 2 (strain D39 / NCTC 7466).